We begin with the raw amino-acid sequence, 337 residues long: Vacuolar protein sorting-associated protein 26B-A (337 aa).

The tract at residues 313–337 is disordered; the sequence is RFEGTSHPETRPQHSGAAAVEQEHE.

It belongs to the VPS26 family. Component of the heterotrimeric retromer cargo-selective complex (CSC) which is believed to associate with variable sorting nexins to form functionally distinct retromer complex variants.

It localises to the cytoplasm. The protein resides in the endosome membrane. It is found in the early endosome. Acts as a component of the retromer cargo-selective complex (CSC). The CSC is believed to be the core functional component of retromer or respective retromer complex variants acting to prevent missorting of selected transmembrane cargo proteins into the lysosomal degradation pathway. Retromer mediates retrograde transport of cargo proteins from endosomes to the trans-Golgi network (TGN). The polypeptide is Vacuolar protein sorting-associated protein 26B-A (vps26b-a) (Xenopus laevis (African clawed frog)).